Here is a 247-residue protein sequence, read N- to C-terminus: TM2 domain-containing protein 3 (247 aa).

Positions 1 to 29 are cleaved as a signal peptide; the sequence is MAGGVLPLRGLRALCRVLLFLSQFCILSG. Residues 30–179 lie on the Extracellular side of the membrane; that stretch reads GEQSQALAQS…RTFPKMLYCN (150 aa). Asn-87, Asn-122, Asn-140, Asn-157, Asn-169, and Asn-179 each carry an N-linked (GlcNAc...) asparagine glycan. Residues 180-200 traverse the membrane as a helical segment; that stretch reads WTGGYKWSTALALSITLGGFG. The 48-residue stretch at 183-230 folds into the TM2 domain; that stretch reads GYKWSTALALSITLGGFGADRFYLGQWREGLGKLFSFGGLGIWTLIDV. Residues 201–215 are Cytoplasmic-facing; it reads ADRFYLGQWREGLGK. A helical transmembrane segment spans residues 216 to 236; the sequence is LFSFGGLGIWTLIDVLLIGVG. At 237 to 247 the chain is on the extracellular side; it reads YVGPADGSLYI.

Belongs to the TM2 family. As to expression, widely expressed.

It is found in the membrane. Functionally, probable positive regulator of Notch signaling. This Homo sapiens (Human) protein is TM2 domain-containing protein 3 (TM2D3).